The sequence spans 478 residues: Ribosomal RNA small subunit methyltransferase F (478 aa).

S-adenosyl-L-methionine-binding positions include 123 to 129, Glu147, Asp174, and Asp192; that span reads AAAPGSK. The Nucleophile role is filled by Cys245.

Belongs to the class I-like SAM-binding methyltransferase superfamily. RsmB/NOP family.

The protein localises to the cytoplasm. It catalyses the reaction cytidine(1407) in 16S rRNA + S-adenosyl-L-methionine = 5-methylcytidine(1407) in 16S rRNA + S-adenosyl-L-homocysteine + H(+). Its function is as follows. Specifically methylates the cytosine at position 1407 (m5C1407) of 16S rRNA. This chain is Ribosomal RNA small subunit methyltransferase F, found in Vibrio campbellii (strain ATCC BAA-1116).